The primary structure comprises 490 residues: DNA-binding protein D-ETS-3 (490 aa).

2 disordered regions span residues 190-255 (TASS…SGGG) and 271-294 (SSTQ…SQLR). The segment covering 196–207 (HVEHKVRADKST) has biased composition (basic and acidic residues). Residues 211–227 (ATTSSHAAAPSSSSSAS) are compositionally biased toward low complexity. Over residues 244–255 (GTGGGASASGGG) the composition is skewed to gly residues. The segment covering 271-280 (SSTQSQGYSS) has biased composition (low complexity). A DNA-binding region (ETS) is located at residues 317–397 (IQLWQFLLEL…HGKRYAYKFD (81 aa)).

The protein belongs to the ETS family. In terms of tissue distribution, embryonic ventral nervous system, higher in the thoracic than abdominal segments.

It is found in the nucleus. This chain is DNA-binding protein D-ETS-3 (Ets65A), found in Drosophila melanogaster (Fruit fly).